The primary structure comprises 126 residues: Histone H2B (126 aa).

Residues 1 to 12 are compositionally biased toward low complexity; the sequence is MPEPAKSAPAPK. The tract at residues 1–36 is disordered; that stretch reads MPEPAKSAPAPKKGSKKAVTKTQKKGDKKRKKSRKE. N6-acetyllysine occurs at positions 6 and 13. The segment covering 13–34 has biased composition (basic residues); it reads KGSKKAVTKTQKKGDKKRKKSR. Serine 15 carries the post-translational modification Phosphoserine. 2 positions are modified to N6-acetyllysine: lysine 16 and lysine 21. A Glycyl lysine isopeptide (Lys-Gly) (interchain with G-Cter in ubiquitin) cross-link involves residue lysine 121.

Belongs to the histone H2B family. In terms of assembly, the nucleosome is a histone octamer containing two molecules each of H2A, H2B, H3 and H4 assembled in one H3-H4 heterotetramer and two H2A-H2B heterodimers. The octamer wraps approximately 147 bp of DNA. Post-translationally, monoubiquitination of Lys-121 by the RNF20/40 complex gives a specific tag for epigenetic transcriptional activation and is also prerequisite for histone H3 'Lys-4' and 'Lys-79' methylation. Phosphorylated on Ser-15 during apoptosis; which facilitates apoptotic chromatin condensation.

The protein resides in the nucleus. It localises to the chromosome. Its function is as follows. Core component of nucleosome. Nucleosomes wrap and compact DNA into chromatin, limiting DNA accessibility to the cellular machineries which require DNA as a template. Histones thereby play a central role in transcription regulation, DNA repair, DNA replication and chromosomal stability. DNA accessibility is regulated via a complex set of post-translational modifications of histones, also called histone code, and nucleosome remodeling. This Cairina moschata (Muscovy duck) protein is Histone H2B.